The following is a 202-amino-acid chain: Na(+)-translocating NADH-quinone reductase subunit E (202 aa).

6 helical membrane-spanning segments follow: residues 11 to 31, 39 to 59, 79 to 99, 114 to 134, 144 to 164, and 180 to 200; these read SIFL…FLAV, MGLG…NQLV, LSFL…QILE, GIFL…AFAV, IFYG…LAAV, and LGSV…FSGV.

This sequence belongs to the NqrDE/RnfAE family. As to quaternary structure, composed of six subunits; NqrA, NqrB, NqrC, NqrD, NqrE and NqrF.

It is found in the cell inner membrane. The catalysed reaction is a ubiquinone + n Na(+)(in) + NADH + H(+) = a ubiquinol + n Na(+)(out) + NAD(+). Functionally, NQR complex catalyzes the reduction of ubiquinone-1 to ubiquinol by two successive reactions, coupled with the transport of Na(+) ions from the cytoplasm to the periplasm. NqrA to NqrE are probably involved in the second step, the conversion of ubisemiquinone to ubiquinol. In Pseudoalteromonas atlantica (strain T6c / ATCC BAA-1087), this protein is Na(+)-translocating NADH-quinone reductase subunit E.